The chain runs to 413 residues: BSD domain-containing protein 1-A (413 aa).

In terms of domain architecture, BSD spans 146-198 (WLAYWDPEQRKAEISELLVTSPSIRALFTKMVPAAVSHSEFWQRYFYKVHQLE). 2 stretches are compositionally biased toward basic and acidic residues: residues 208–219 (KQRADQSVHSEE) and 255–271 (HVEDKSEKTAELNRDHT). Disordered regions lie at residues 208 to 228 (KQRADQSVHSEEPTWEEEEED) and 255 to 386 (HVED…EFDM). A compositionally biased stretch (low complexity) spans 274-287 (TSPSESSESISPIT). The span at 297–322 (QTPSKEPSPGTLTVTKENTGAGTDET) shows a compositional bias: polar residues. The span at 342–352 (QREDPPSDLRV) shows a compositional bias: basic and acidic residues. The segment covering 356–375 (NSDSGKSTPSNNGQKGSSTD) has biased composition (polar residues). Acidic residues predominate over residues 376–386 (ISEDWEKEFDM).

The polypeptide is BSD domain-containing protein 1-A (bsdc1-a) (Xenopus laevis (African clawed frog)).